The sequence spans 178 residues: UPF0232 protein cgR_0005 (178 aa).

The interval 16–55 (AMRRNGSVPDLNKNDAFRRPPAPKGGVEKRKKGRASGLDG) is disordered.

It belongs to the UPF0232 family.

The chain is UPF0232 protein cgR_0005 from Corynebacterium glutamicum (strain R).